Here is a 645-residue protein sequence, read N- to C-terminus: Sodium/hydrogen exchanger 9 (645 aa).

Residues 1 to 20 lie on the Lumenal side of the membrane; the sequence is MERQSRVMSEKDEYQFQHQG. The chain crosses the membrane as a helical span at residues 21–41; sequence AVELLVFNFLLILTILTIWLF. Residues 42–45 lie on the Cytoplasmic side of the membrane; the sequence is KNHR. Residues 46 to 66 form a helical membrane-spanning segment; that stretch reads FRFLHETGGAMVYGLIMGLIL. The Lumenal segment spans residues 67 to 126; it reads RYATAPTDIESGTVYDCVKLTFSPSTLLVNITDQVYEYKYKREISQHNINPHQGNAILEK. Asparagine 96 carries an N-linked (GlcNAc...) asparagine glycan. Residues 127–147 traverse the membrane as a helical segment; sequence MTFDPEIFFNVLLPPIIFHAG. The Cytoplasmic portion of the chain corresponds to 148–164; sequence YSLKKRHFFQNLGSILT. A helical membrane pass occupies residues 165-185; that stretch reads YAFLGTAISCIVIGLIMYGFV. Over 186 to 203 the chain is Lumenal; sequence KAMIHAGQLKNGDFHFTD. The helical transmembrane segment at 204–224 threads the bilayer; the sequence is CLFFGSLMSATDPVTVLAIFH. Residues 225-235 lie on the Cytoplasmic side of the membrane; it reads ELHVDPDLYTL. A helical membrane pass occupies residues 236–256; the sequence is LFGESVLNDAVAIVLTYSISI. Over 257–277 the chain is Lumenal; sequence YSPKENPNAFDAAAFFQSVGN. The helical transmembrane segment at 278–298 threads the bilayer; that stretch reads FLGIFAGSFAMGSAYAIITAL. The Cytoplasmic portion of the chain corresponds to 299–301; sequence LTK. 2 helical membrane-spanning segments follow: residues 302–322 and 323–343; these read FTKLCEFPMLETGLFFLLSWS and AFLSAEAAGLTGIVAVLFCGV. Residues 344-364 are Cytoplasmic-facing; sequence TQAHYTYNNLSSDSKIRTKQL. Residues 365 to 385 traverse the membrane as a helical segment; that stretch reads FEFMNFLAENVIFCYMGLALF. Residue threonine 386 is a topological domain, lumenal. A helical membrane pass occupies residues 387–407; the sequence is FQNHIFNALFILGAFLAIFVA. At 408-429 the chain is on the cytoplasmic side; the sequence is RACNIYPLSFLLNLGRKQKIPW. Residues 430-450 traverse the membrane as a helical segment; it reads NFQHMMMFSGLRGAIAFALAI. Over 451–465 the chain is Lumenal; it reads RNTESQPKQMMFTTT. The chain crosses the membrane as a helical span at residues 466-486; that stretch reads LLLVFFTVWVFGGGTTPMLTW. Topologically, residues 487–645 are cytoplasmic; it reads LQIRVGVDLD…EQTLGQSQLN (159 aa). A disordered region spans residues 594–622; that stretch reads QASSPCSPPARLGLDQKASPQTPGKENIY.

Belongs to the monovalent cation:proton antiporter 1 (CPA1) transporter (TC 2.A.36) family. Homodimer; phosphatidylinositol-4,5-bisphosphate (PIP2) and phosphatidylinositol 3,4,5-trisphosphate (PIP3) could be involved in the dimer stabilization. Interacts (via the C-terminus) with RACK1. Interacts with CHP1. Ubiquitously expressed in all tissues tested. Expressed at highest levels in heart and skeletal muscle, followed by placenta, kidney, and liver. Expressed in the brain, in the medulla and spinal cord.

The protein resides in the late endosome membrane. It localises to the early endosome membrane. It is found in the recycling endosome membrane. The protein localises to the cell membrane. Its subcellular location is the cytoplasmic vesicle. The protein resides in the phagosome membrane. It catalyses the reaction Na(+)(in) + H(+)(out) = Na(+)(out) + H(+)(in). The catalysed reaction is K(+)(in) + H(+)(out) = K(+)(out) + H(+)(in). Endosomal Na(+), K(+)/H(+) antiporter. Mediates the electroneutral exchange of endosomal luminal H(+) for a cytosolic Na(+) or K(+). By facilitating proton efflux, SLC9A9 counteracts the acidity generated by vacuolar (V)-ATPase, thereby limiting luminal acidification. Regulates organellar pH and consequently, e.g., endosome maturation and endocytic trafficking of plasma membrane receptors and neurotransporters. Promotes the recycling of transferrin receptors back to the cell surface to facilitate additional iron uptake in the brain. Regulates synaptic transmission by regulating the luminal pH of axonal endosomes. Regulates phagosome lumenal pH, thus affecting phagosome maturation, and consequently, microbicidal activity in macrophages. Can also be active at the cell surface of specialized cells, e.g., in the inner ear hair bundles uses the high K(+) of the endolymph to regulate intracelular pH. This is Sodium/hydrogen exchanger 9 from Homo sapiens (Human).